The sequence spans 357 residues: Phosphoserine aminotransferase (357 aa).

Residue Arg41 participates in L-glutamate binding. Residues 75-76 (GT), Trp100, Thr150, Asp170, and Gln193 contribute to the pyridoxal 5'-phosphate site. Position 194 is an N6-(pyridoxal phosphate)lysine (Lys194). 234–235 (NT) provides a ligand contact to pyridoxal 5'-phosphate.

This sequence belongs to the class-V pyridoxal-phosphate-dependent aminotransferase family. SerC subfamily. In terms of assembly, homodimer. The cofactor is pyridoxal 5'-phosphate.

It is found in the cytoplasm. It catalyses the reaction O-phospho-L-serine + 2-oxoglutarate = 3-phosphooxypyruvate + L-glutamate. It carries out the reaction 4-(phosphooxy)-L-threonine + 2-oxoglutarate = (R)-3-hydroxy-2-oxo-4-phosphooxybutanoate + L-glutamate. The protein operates within amino-acid biosynthesis; L-serine biosynthesis; L-serine from 3-phospho-D-glycerate: step 2/3. In terms of biological role, catalyzes the reversible conversion of 3-phosphohydroxypyruvate to phosphoserine and of 3-hydroxy-2-oxo-4-phosphonooxybutanoate to phosphohydroxythreonine. The chain is Phosphoserine aminotransferase from Lactiplantibacillus plantarum (strain ATCC BAA-793 / NCIMB 8826 / WCFS1) (Lactobacillus plantarum).